The chain runs to 397 residues: L-rhamnonate dehydratase (397 aa).

His-25 and Arg-51 together coordinate substrate. Asp-217, Glu-243, and Glu-271 together coordinate Mg(2+). His-321 (proton acceptor) is an active-site residue. Glu-341 serves as a coordination point for substrate.

The protein belongs to the mandelate racemase/muconate lactonizing enzyme family. RhamD subfamily. In terms of assembly, homooctamer; tetramer of dimers. It depends on Mg(2+) as a cofactor.

The enzyme catalyses L-rhamnonate = 2-dehydro-3-deoxy-L-rhamnonate + H2O. It participates in carbohydrate degradation; L-rhamnose degradation. Its function is as follows. Catalyzes the dehydration of L-rhamnonate to 2-keto-3-deoxy-L-rhamnonate (KDR). Also shows activity with L-lyxonate and L-mannonate, with much lower catalytic efficiency. Catalyzes the third step in an alternative pathway for rhamnose utilization that does not involve phosphorylated intermediates. The polypeptide is L-rhamnonate dehydratase (Sphingomonas sp. (strain SKA58)).